Reading from the N-terminus, the 606-residue chain is Sporulation kinase A (606 aa).

The PAS 1 domain maps to 3-73; that stretch reads QDTQHVKPLQ…SYFYNEHHLM (71 aa). A PAC 1 domain is found at 77 to 116; sequence FRFIKKDHTIVWVEAAVEIVTTRAERTEREIILKMKVLEE. In terms of domain architecture, PAS 2 spans 140-214; the sequence is YITDDYERLV…IRMQKGMEVG (75 aa). Positions 218–255 constitute a PAC 2 domain; the sequence is QTWKRLDGTPVHLEVKASPTVYKNQQAELLLLIDISSR. In terms of domain architecture, PAS 3 spans 265–335; sequence SRERYQLLIQ…ERIQNIAEQK (71 aa). Positions 402 to 606 constitute a Histidine kinase domain; sequence GIAHEIRNPL…TAFKISFPKK (205 aa). Phosphohistidine; by autocatalysis is present on histidine 405.

The catalysed reaction is ATP + protein L-histidine = ADP + protein N-phospho-L-histidine.. Phosphorylates the sporulation-regulatory proteins spo0A and spo0F. It also autophosphorylates in the presence of ATP. This is Sporulation kinase A (kinA) from Bacillus subtilis (strain 168).